Consider the following 139-residue polypeptide: Mitochondrial intermembrane space import and assembly protein 40-A (139 aa).

3 disulfides stabilise this stretch: C53-C55, C64-C97, and C74-C87. The CHCH domain maps to 61–105; the sequence is SGPCGEQFKSAFSCFHYSQEEIKGSDCLDQFRGMQECMQKYPDLY. 2 consecutive short sequence motifs (cx9C motif) follow at residues 64 to 74 and 87 to 97; these read CGEQFKSAFSC and CLDQFRGMQEC. Positions 103–139 are disordered; sequence DLYPQEDDEEEAEKEKQNKEAEPSVTQSSDTKEESSS. A compositionally biased stretch (basic and acidic residues) spans 115-124; the sequence is EKEKQNKEAE.

Monomer. Can form homooligomers.

It localises to the mitochondrion intermembrane space. In terms of biological role, central component of a redox-sensitive mitochondrial intermembrane space import machinery which is required for the biogenesis of respiratory chain complexes. Functions as chaperone and catalyzes the formation of disulfide bonds in substrate proteins, such as COX17 or MICU1. Required for the import and folding of small cysteine-containing proteins (small Tim) in the mitochondrial intermembrane space (IMS). Precursor proteins to be imported into the IMS are translocated in their reduced form into the mitochondria. The polypeptide is Mitochondrial intermembrane space import and assembly protein 40-A (chchd4-a) (Xenopus laevis (African clawed frog)).